The sequence spans 91 residues: MGSMSVWHWVIVAVVVMLLFGRGKVSELMGDVAKGIKAFKKGMADDETQPTNTTSVPPVGPNDPVRTLPHQGAPGTAPQQTHVPAGDHKAV.

Residues 1-21 (MGSMSVWHWVIVAVVVMLLFG) form a helical membrane-spanning segment. The tract at residues 42 to 91 (GMADDETQPTNTTSVPPVGPNDPVRTLPHQGAPGTAPQQTHVPAGDHKAV) is disordered.

It belongs to the TatA/E family. In terms of assembly, the Tat system comprises two distinct complexes: a TatABC complex, containing multiple copies of TatA, TatB and TatC subunits, and a separate TatA complex, containing only TatA subunits. Substrates initially bind to the TatABC complex, which probably triggers association of the separate TatA complex to form the active translocon.

Its subcellular location is the cell inner membrane. In terms of biological role, part of the twin-arginine translocation (Tat) system that transports large folded proteins containing a characteristic twin-arginine motif in their signal peptide across membranes. TatA could form the protein-conducting channel of the Tat system. This is Sec-independent protein translocase protein TatA from Methylorubrum populi (strain ATCC BAA-705 / NCIMB 13946 / BJ001) (Methylobacterium populi).